The primary structure comprises 354 residues: Mating-type protein MAT-1 (354 aa).

The segment at residues Lys60–Arg117 is a DNA-binding region (alpha box).

It belongs to the MATALPHA1 family.

The protein localises to the nucleus. Functionally, mating type proteins are sequence specific DNA-binding proteins that act as master switches in fungal differentiation by controlling gene expression in a cell type-specific fashion. Transcriptional activator that induces the transcription of alpha-specific genes. This Cochliobolus cymbopogonis (Curvularia cymbopogonis) protein is Mating-type protein MAT-1 (MAT1).